Reading from the N-terminus, the 298-residue chain is GTPase Era (298 aa).

An Era-type G domain is found at 3-170 (KSGFVAILGR…IKLLTDNLEE (168 aa)). Positions 11 to 18 (GRPNVGKS) are G1. Residue 11-18 (GRPNVGKS) coordinates GTP. Residues 37-41 (QTTRN) form a G2 region. A G3 region spans residues 58 to 61 (DTPG). GTP contacts are provided by residues 58-62 (DTPGI) and 120-123 (NKID). Positions 120–123 (NKID) are G4. Residues 149–151 (ISA) form a G5 region. In terms of domain architecture, KH type-2 spans 201–279 (TQQEVPHSVA…YLETWVKVKK (79 aa)).

Belongs to the TRAFAC class TrmE-Era-EngA-EngB-Septin-like GTPase superfamily. Era GTPase family. In terms of assembly, monomer.

Its subcellular location is the cytoplasm. It localises to the cell membrane. Its function is as follows. An essential GTPase that binds both GDP and GTP, with rapid nucleotide exchange. Plays a role in 16S rRNA processing and 30S ribosomal subunit biogenesis and possibly also in cell cycle regulation and energy metabolism. The chain is GTPase Era from Streptococcus pyogenes serotype M3 (strain ATCC BAA-595 / MGAS315).